The primary structure comprises 368 residues: Terpene cyclase penA (368 aa).

A run of 6 helical transmembrane segments spans residues 10–30, 81–101, 118–138, 192–212, 233–253, and 334–354; these read IILA…NGFI, LSLY…ILLM, LTGL…LLAM, LFIA…GIAH, FALA…FLSI, and LATM…YWTA.

Belongs to the membrane-bound ascI terpene cyclase family.

The protein resides in the membrane. The protein operates within secondary metabolite biosynthesis. Part of the gene cluster that mediates the biosynthesis of the indole diterpenes penitrems. The geranylgeranyl diphosphate (GGPP) synthase penG catalyzes the first step in penitrem biosynthesis via conversion of farnesyl pyrophosphate and isopentyl pyrophosphate into geranylgeranyl pyrophosphate (GGPP). Condensation of indole-3-glycerol phosphate with GGPP by the prenyl transferase penC then forms 3-geranylgeranylindole (3-GGI). Epoxidation by the FAD-dependent monooxygenase penM leads to a epoxidized-GGI that is substrate of the terpene cyclase penB for cyclization to yield paspaline. Paspaline is subsequently converted to 13-desoxypaxilline by the cytochrome P450 monooxygenase penP, the latter being then converted to paxilline by the cytochrome P450 monooxygenase penQ. Paxilline is converted to beta-paxitriol via C-10 ketoreduction by the short-chain dehydrogenase PC-15 which can be monoprenylated at the C-20 by the indole diterpene prenyltransferase penD. A two-step elimination (acetylation and elimination) process performed by the O-acetyltransferase PC-16 and the P.simplicissimum ptmI-ortholog not yet identified in P.crustosum, leads to the production of the prenylated form of penijanthine. The FAD-linked oxidoreductase ptmO then converts the prenylated form of penijanthine into PC-M5 which is in turn transformed into PC-M4 by the aromatic dimethylallyltransferase PC-22. A series of oxidation steps involving 4 cytochrome P450 monooxygenases (PC-21, PC-05, PC-23, PC-20) and a FAD-dependent monooxygenase (PC-14) are required for the transformation of PC-M4 to penitrems A and E. Synthesis of these final products is proposed to proceed via penitrems D and C (PC-21, PC-05, PC-14) and penitrems B and F (PC-21, PC-05, PC-14, PC-23). The polypeptide is Terpene cyclase penA (Penicillium crustosum (Blue mold fungus)).